Consider the following 294-residue polypeptide: Probable 2-(5''-triphosphoribosyl)-3'-dephosphocoenzyme-A synthase (294 aa).

This sequence belongs to the CitG/MdcB family.

The catalysed reaction is 3'-dephospho-CoA + ATP = 2'-(5''-triphospho-alpha-D-ribosyl)-3'-dephospho-CoA + adenine. This chain is Probable 2-(5''-triphosphoribosyl)-3'-dephosphocoenzyme-A synthase, found in Streptococcus pyogenes serotype M18 (strain MGAS8232).